The chain runs to 99 residues: Putative protein tag-209 (99 aa).

Positions 1–16 (MLKLLAFVALLSVSVS) are cleaved as a signal peptide.

In Caenorhabditis elegans, this protein is Putative protein tag-209 (tag-209).